Here is a 137-residue protein sequence, read N- to C-terminus: NADH-quinone oxidoreductase subunit A (137 aa).

The next 3 helical transmembrane spans lie at 12-32 (WGFA…LGLS), 66-86 (FYLV…LFAW), and 95-115 (WTGF…LVYL).

This sequence belongs to the complex I subunit 3 family. In terms of assembly, NDH-1 is composed of 13 different subunits. Subunits NuoA, H, J, K, L, M, N constitute the membrane sector of the complex.

It localises to the cell inner membrane. It catalyses the reaction a quinone + NADH + 5 H(+)(in) = a quinol + NAD(+) + 4 H(+)(out). Functionally, NDH-1 shuttles electrons from NADH, via FMN and iron-sulfur (Fe-S) centers, to quinones in the respiratory chain. The immediate electron acceptor for the enzyme in this species is believed to be ubiquinone. Couples the redox reaction to proton translocation (for every two electrons transferred, four hydrogen ions are translocated across the cytoplasmic membrane), and thus conserves the redox energy in a proton gradient. The polypeptide is NADH-quinone oxidoreductase subunit A (Pseudomonas savastanoi pv. phaseolicola (strain 1448A / Race 6) (Pseudomonas syringae pv. phaseolicola (strain 1448A / Race 6))).